Consider the following 82-residue polypeptide: Large ribosomal subunit protein bL27 (82 aa).

Residues 1–20 form a disordered region; the sequence is MATKKAGGSSSNGRDSIGKR.

The protein belongs to the bacterial ribosomal protein bL27 family.

In Neorickettsia sennetsu (strain ATCC VR-367 / Miyayama) (Ehrlichia sennetsu), this protein is Large ribosomal subunit protein bL27.